A 607-amino-acid polypeptide reads, in one-letter code: MARVKQKGKAGAARIYITRNQALKKLQLTLADFRRICILKGVYPREPKNKKKANKGSTAPVTFYYTKDIQYLLHEPIVQKFREYKVFARKLSKALGKGELETAKRLEARKPTYSLDHIIKERYPTFHDALKDIDDALSMLFLFSTMPVTDKIGAATVANCERLCAEFQHYVIRSNSLRKAFLSIKGIYYQAEIFGEQITWIVPYKFAQSVPTDVDFRIMHTFLEFYQALMGFVNFKLYNTLGLRYPPKIDVAKSESAAGLAAYELEESSSLPAIVHGNNKNARKNIATLKSKIRDIVNSDANVVEQSEKTTEDADEEPETEENLDEFKPADGADNEDSKSLVSHISSSNTSLFSNFTFFLSREVPRFSLEFVIRAFGGKVGWDPILGSGSPFSESDPVITHHICDRPHISQKYEGRIYIQPQWVYDSINKGILERTDLYACGATLPPHLSPFVKVGENDYDPEAELSAEENDDVSEALDDNISGEAVPISKKNDEPENVEQIDDAEEEDLEHQRELEAEAGGVAYSEYVKQNSKSAKKTKKRQRDTLTAEEKEEKEAKELSKMMMSNKQRKLYSKLKNENSKNENYNNALRNRKRDIEKRKKLKVEN.

The interval 301–341 (ANVVEQSEKTTEDADEEPETEENLDEFKPADGADNEDSKSL) is disordered. Positions 313–324 (DADEEPETEENL) are enriched in acidic residues. The span at 325-339 (DEFKPADGADNEDSK) shows a compositional bias: basic and acidic residues. One can recognise a BRCT domain in the interval 348-441 (SNTSLFSNFT…ILERTDLYAC (94 aa)). The stretch at 497–604 (ENVEQIDDAE…RDIEKRKKLK (108 aa)) forms a coiled coil. A disordered region spans residues 531–607 (QNSKSAKKTK…EKRKKLKVEN (77 aa)). 2 stretches are compositionally biased toward basic and acidic residues: residues 544–561 (RDTLTAEEKEEKEAKELS) and 595–607 (RDIEKRKKLKVEN).

Belongs to the pescadillo family. Component of the NOP7 complex, composed of erb1/SPBC4F6.13c, ppp1/SPBC19F5.05c and ytm1/SPAC890.04c. Within the NOP7 complex erb1/SPBC4F6.13c appears to interact directly with ppp1/SPBC19F5.05c and ytm1/SPAC890.04c. The NOP7 complex also associates with the 66S pre-ribosome.

The protein resides in the nucleus. It localises to the nucleoplasm. The protein localises to the nucleolus. Functionally, component of the NOP7 complex, which is required for maturation of the 25S and 5.8S ribosomal RNAs and formation of the 60S ribosome. In Schizosaccharomyces pombe (strain 972 / ATCC 24843) (Fission yeast), this protein is Pescadillo homolog (ppp1).